A 322-amino-acid chain; its full sequence is HPr kinase/phosphorylase (322 aa).

Catalysis depends on residues His-146 and Lys-167. An ATP-binding site is contributed by 161–168 (GDSGLGKS). Ser-168 contacts Mg(2+). The active-site Proton acceptor; for phosphorylation activity. Proton donor; for dephosphorylation activity is the Asp-185. The segment at 209 to 218 (LEVRGLGLLD) is important for the catalytic mechanism of both phosphorylation and dephosphorylation. Glu-210 serves as a coordination point for Mg(2+). The active site involves Arg-250. The important for the catalytic mechanism of dephosphorylation stretch occupies residues 271 to 276 (QVAAGR).

Belongs to the HPrK/P family. As to quaternary structure, homohexamer. It depends on Mg(2+) as a cofactor.

The enzyme catalyses [HPr protein]-L-serine + ATP = [HPr protein]-O-phospho-L-serine + ADP + H(+). It catalyses the reaction [HPr protein]-O-phospho-L-serine + phosphate + H(+) = [HPr protein]-L-serine + diphosphate. In terms of biological role, catalyzes the ATP- as well as the pyrophosphate-dependent phosphorylation of a specific serine residue in HPr, a phosphocarrier protein of the phosphoenolpyruvate-dependent sugar phosphotransferase system (PTS). HprK/P also catalyzes the pyrophosphate-producing, inorganic phosphate-dependent dephosphorylation (phosphorolysis) of seryl-phosphorylated HPr (P-Ser-HPr). This chain is HPr kinase/phosphorylase, found in Paraburkholderia phytofirmans (strain DSM 17436 / LMG 22146 / PsJN) (Burkholderia phytofirmans).